Reading from the N-terminus, the 673-residue chain is Metal-nicotianamine transporter YSL1 (673 aa).

The segment covering 1–13 (MEIEQRRIMKREG) has biased composition (basic and acidic residues). The disordered stretch occupies residues 1–39 (MEIEQRRIMKREGEEEEDNNQLSLQEEEPDTEEEMSGRT). Over residues 14 to 34 (EEEEDNNQLSLQEEEPDTEEE) the composition is skewed to acidic residues. 16 consecutive transmembrane segments (helical) span residues 46-66 (QITV…SVIA), 71-91 (LTTG…FVFV), 119-139 (SAVA…LLGL), 163-183 (GLGW…FVLI), 225-245 (FMKY…FSGI), 260-280 (AWKQ…GMIC), 283-303 (LVNL…WPLL), 328-348 (VFLS…KILF), 392-412 (FAVS…PLIF), 420-440 (VIVA…GAGL), 442-462 (DINM…AVTG), 467-487 (VVAG…SCIL), 510-530 (IGTV…YKAF), 558-578 (FSAL…FAVL), 604-624 (FLVG…VFVW), and 642-662 (GLIC…LAGV).

Belongs to the YSL (TC 2.A.67.2) family. As to expression, low levels of expression in leaves and shoots, but not detected in roots. Restricted to the vasculature, in the xylem parenchyma surrounding xylem tubes. Expressed in pollen grains, in the vasculature of petals and sepals, in the carpel veins, in the style underneath the stigmatic papillae, in the vascular tissue of the funiculus and in the chalazal endosperm.

It is found in the membrane. Its function is as follows. Involved in iron loading of the seeds. Acts probably as a transporter of iron- and metal-nicotianamine chelates. This Arabidopsis thaliana (Mouse-ear cress) protein is Metal-nicotianamine transporter YSL1 (YSL1).